A 354-amino-acid polypeptide reads, in one-letter code: Probable L-ascorbate-6-phosphate lactonase UlaG (354 aa).

Belongs to the UlaG family. The cofactor is a divalent metal cation.

The protein resides in the cytoplasm. It catalyses the reaction L-ascorbate 6-phosphate + H2O = 3-dehydro-L-gulonate 6-phosphate. The protein operates within cofactor degradation; L-ascorbate degradation; D-xylulose 5-phosphate from L-ascorbate: step 1/4. Its function is as follows. Probably catalyzes the hydrolysis of L-ascorbate-6-P into 3-keto-L-gulonate-6-P. Is essential for L-ascorbate utilization under anaerobic conditions. This is Probable L-ascorbate-6-phosphate lactonase UlaG from Salmonella choleraesuis (strain SC-B67).